We begin with the raw amino-acid sequence, 67 residues long: Minor structural pilin EpdD (67 aa).

A propeptide spanning residues 1–13 is cleaved from the precursor; the sequence is MSVALKKFFSKRG. Positions 14-22 match the QXSXEXXXL motif; the sequence is QLSLEFSVL.

Post-translationally, the N-terminus is cleaved by the prepilin peptidase EppA, which recognizes the class III signal sequence. N-glycosylated. Glycosylation is AglB-dependent. The N-glycosylation does not occur unless the signal peptide has been cleaved first.

The protein localises to the secreted. It is found in the cell surface. Its subcellular location is the fimbrium. Its function is as follows. Minor component of the type IV-like pili. Essential for pili formation. The sequence is that of Minor structural pilin EpdD from Methanococcus maripaludis (strain DSM 14266 / JCM 13030 / NBRC 101832 / S2 / LL).